A 465-amino-acid chain; its full sequence is Branched-chain amino acid permease BcaP (465 aa).

The next 12 helical transmembrane spans lie at 28–48, 56–76, 88–110, 149–169, 181–201, 219–239, 259–279, 309–329, 359–379, 380–400, 416–436, and 438–458; these read FLAL…PGQV, GVVF…LAYA, AYSW…ALLA, DGGI…IIVF, ILVV…ITVI, FGGF…YIGF, GIIG…LVLV, VVTA…VLAG, VWTL…AFLA, QLIS…IYSL, PFYP…FWGL, and VQAK…YFAY.

It belongs to the amino acid-polyamine-organocation (APC) superfamily.

The protein resides in the cell membrane. Branched-chain amino acid transport system that specifically transports branched-chain amino acids (BCAAs) (isoleucine, leucine and valine) and, to a lesser extent, methionine. Important for CodY-mediated regulation, and required for optimal growth in media containing free amino acids as the only amino acid source. The sequence is that of Branched-chain amino acid permease BcaP from Lactococcus lactis subsp. cremoris (strain MG1363).